Reading from the N-terminus, the 1280-residue chain is Pullulanase A (1280 aa).

The signal sequence occupies residues 1–44 (MRKTPSHTEKKMVYSIRSLKNGTGSVLIGASLVLLAMATPTISS). Residues 42 to 132 (ISSDESTPTT…VTTETKAEEP (91 aa)) form a disordered region. Residues 48-61 (TPTTNEPNNRNTTT) show a composition bias toward low complexity. Over residues 79 to 90 (DISSPGNANASL) the composition is skewed to polar residues. A compositionally biased stretch (low complexity) spans 115-126 (EPTTSTSPVTTE). Residues 156-158 (WTW), Trp-168, Asp-214, 263-265 (WYW), Trp-276, Lys-318, and Asn-323 contribute to the substrate site. Residues Ser-661 and Tyr-663 each contribute to the Ca(2+) site. Residues 667–668 (YD) and Phe-743 contribute to the substrate site. The Nucleophile role is filled by Asp-778. Residue Glu-807 is the Proton donor of the active site. A substrate-binding site is contributed by Trp-809. Ca(2+) is bound by residues Met-828, Thr-831, and Asp-832. Positions 839, 842, and 849 each coordinate substrate. Ca(2+)-binding residues include Asp-882 and Asp-886. Substrate is bound by residues Asn-896, Lys-969, and 989–991 (DSY). Asp-992 is a Ca(2+) binding site. A disordered region spans residues 1140-1248 (VSQNGTSHES…TPDKQAELPN (109 aa)). Basic and acidic residues predominate over residues 1149–1196 (STAEEKPDSTPSKPEHQNEASHPAHQDPAPEARPDSTKPDAKVADAEN). Residues 1205-1218 (SQAEQPAQEAQASS) show a composition bias toward low complexity. The LPXTG sorting signal motif lies at 1246 to 1250 (LPNTG). Thr-1249 carries the post-translational modification Pentaglycyl murein peptidoglycan amidated threonine. Residues 1250 to 1280 (GIKNENKLLFAGISLLALLGLGFLLKNKKEN) constitute a propeptide, removed by sortase.

The protein belongs to the glycosyl hydrolase 13 family.

The protein localises to the secreted. It is found in the cell wall. The protein resides in the cell surface. It catalyses the reaction Hydrolysis of (1-&gt;6)-alpha-D-glucosidic linkages in pullulan, amylopectin and glycogen, and in the alpha- and beta-limit dextrins of amylopectin and glycogen.. With respect to regulation, inhibited by 4-O-alpha-D-glucopyranosylmoranoline (G1M). Functionally, virulence factor. Involved in the degradation of glycogen of the mammalian host cells. Hydrolyzes the alpha-1,6-branchpoints of glycogen. Hydrolyzes pullulan. Does not hydrolyze dextran. Binds to mouse lung alveolar type II cells that are rich in glycogen stores. Is an alpha-glucan-specific carbohydrate-binding protein, which binds to amylose (pure alpha-(1,4)-linked glucose), amylopectin (alpha-(1,4)-linked glucose with alpha-(1,6) branch points), pullulan (linear polymer of mixed alpha-(1,4)- and alpha-(1,6)-linked glucose) and glycogen (similar to amylopectin with more frequent alpha-(1,6) branch points) in vitro. Does not bind to dextran (a linear polymer of alpha-(1,6)-linked glucose). The chain is Pullulanase A from Streptococcus pneumoniae serotype 4 (strain ATCC BAA-334 / TIGR4).